We begin with the raw amino-acid sequence, 731 residues long: Vezatin (731 aa).

A run of 2 helical transmembrane segments spans residues 91 to 111 (LATP…LLVM) and 114 to 134 (TWWI…YLVI). Residues 382 to 414 (VRSLQLHLKALLNEVIILEDELEKLVCTKETQE) adopt a coiled-coil conformation. Disordered regions lie at residues 570–671 (PVDP…DSLQ) and 710–731 (QTFG…IEEK). A compositionally biased stretch (polar residues) spans 577–586 (ISNSEPSMNS). Residues 590-601 (KVSKNDTEEESS) show a composition bias toward basic and acidic residues. Over residues 658 to 671 (GLTTAPPTPRDSLQ) the composition is skewed to polar residues. Residues 712-721 (FGDEEEEQII) are compositionally biased toward acidic residues. Positions 722–731 (EENKNKIEEK) are enriched in basic and acidic residues.

This sequence belongs to the vezatin family. Interacts with USH2A (via the cytoplasmic region); the interaction associates VEZT with the USH2 complex at the stereocilia base. Interacts with myosin MYO7A and the cadherin-catenins complex.

The protein resides in the cell membrane. It is found in the cell projection. The protein localises to the stereocilium membrane. It localises to the cell junction. Its subcellular location is the adherens junction. The protein resides in the nucleus. It is found in the cytoplasmic vesicle. The protein localises to the secretory vesicle. It localises to the acrosome. Functionally, plays a pivotal role in the establishment of adherens junctions and their maintenance in adult life. Required for morphogenesis of the preimplantation embryo, and for the implantation process. The protein is Vezatin (VEZT) of Pongo abelii (Sumatran orangutan).